A 1148-amino-acid chain; its full sequence is MDTPESPTQSPQSPEEEEKGLSDNELLESPESPAEADKGVSDSELLNDDENEVPEHGGDSDSEDRDRQPAGREDPEELSDVEDYKLDREEREDIHQQEGALRVQEIAQKAIKSPEEEILETPRSPDPVSPAAEHERPFTPAEEERGDDDEEEEEDETTTKSGLGQAELEEEEDEEEERRRRRRAAMVVSDLKDESSVSRDLDEHELDYDEEVPEEPSAAAPEEDEPEKPAVGEDGEDEEEEDEEEEKRRKRKERKPILPPDNRDTPLRKSEDSREGGRRDSFRDKKKEEDDGEIDEGEIDDDDLEEGEVKDPMDRKIRPRPICRFFMKGSFVTMYGNVKFFFFKSYLVFLTGNCTWGMICRFIHPGVNDKGNYSLISKPDPFSPNGAPPGGAAGGGPHPLMPANPWGAPAVEELPPPPPPLDPPVESAWERGLRHAKEVLKKATIRKEQEPDFEEKRFTVTIGEDDRDFDKENDFFRERGGYRITREIRDAGSDPYGDPYYDYEMEAFWRGGQYENFRVQYTETPLPYYPDRERERDPRERHRERERERERDHRERERRQREREREREREREKDSRRRKDEWDRDRLKRDEKEGRPRERPLREPREKKDEKEKTLKPRSPTNMPPRGPMEPPTKKDMLSVTKRPDEWNDPWCRSKSPRRRPGFMGSPPRGRRRHRPSGSSVSLSNSSRSSSRSSSFTGSGSSRSRSRSRSSSMSSYSSHSSQHSSFSGSRSRSGSFSSSPSPSPSAQRNANKNKAEQPPAAAKGPPLKPGALPPPRRDKGPPKVMPSPSLPEQPGKPPKPITETVKPPNPRPPGRPPGPREPREPPNMREGRKKERQQHNPPRRRTVSGSVSGSSYSGSSSRSRSRSSSASASRSGSHKSRSLSVSSVSSVSSASSSSSSVRSADSDDMYADLASPVSSASSRSPTPGHPRKDRGPPRERGPNKERGKPPKKDEPFKDERKRVDPSGLPSKASSDMPRSGNRGHPMHPPPMGPPGGYGSHKDIKLTLLNKQQTDRSNRKRYFPSDKERPPSPLRKRMAMSPDGGRDRRMPGRPPMSPRMERPKGQGPRPMPSQGERKRPLSPPAKSSGKGPAAASAAKPPAPGAGSGSASGSAPGKPSSTLSRREELLKQLKAVEDAIARKRAKIPGK.

Positions 1-13 are enriched in low complexity; the sequence is MDTPESPTQSPQS. 3 disordered regions span residues 1–315, 380–417, and 521–1127; these read MDTP…PMDR, DPFS…LPPP, and YTET…REEL. Basic and acidic residues-rich tracts occupy residues 53–73 and 82–96; these read VPEH…AGRE and EDYK…DIHQ. 2 stretches are compositionally biased toward acidic residues: residues 144 to 156 and 167 to 176; these read ERGD…EEDE and ELEEEEDEEE. Positions 190–202 are enriched in basic and acidic residues; it reads DLKDESSVSRDLD. 2 stretches are compositionally biased toward acidic residues: residues 203-214 and 233-245; these read EHELDYDEEVPE and EDGE…DEEE. Basic and acidic residues predominate over residues 261–289; sequence DNRDTPLRKSEDSREGGRRDSFRDKKKEE. Acidic residues predominate over residues 290–306; the sequence is DDGEIDEGEIDDDDLEE. Positions 388 to 397 are enriched in gly residues; it reads PPGGAAGGGP. Residues 530 to 615 are compositionally biased toward basic and acidic residues; sequence PDRERERDPR…EKKDEKEKTL (86 aa). A coiled-coil region spans residues 543–584; the sequence is RERERERERDHRERERRQREREREREREREKDSRRRKDEWDR. Positions 622–631 are enriched in pro residues; it reads NMPPRGPMEP. Residues 632 to 646 show a composition bias toward basic and acidic residues; sequence PTKKDMLSVTKRPDE. S666 is modified (phosphoserine). Residues 677–740 are compositionally biased toward low complexity; it reads SGSSVSLSNS…SRSGSFSSSP (64 aa). Pro residues-rich tracts occupy residues 783 to 800 and 807 to 817; these read KVMP…PPKP and PPNPRPPGRPP. Basic and acidic residues predominate over residues 818-833; that stretch reads GPREPREPPNMREGRK. 3 stretches are compositionally biased toward low complexity: residues 847–875, 882–903, and 914–925; these read VSGS…ASRS, SLSV…SVRS, and ASPVSSASSRSP. Composition is skewed to basic and acidic residues over residues 933–964 and 1012–1029; these read DRGP…KRVD and QTDR…KERP. S1056 carries the post-translational modification Phosphoserine. Composition is skewed to low complexity over residues 1083-1098 and 1107-1119; these read PAKS…SAAK and GSAS…KPSS. Residues 1118-1146 are a coiled coil; that stretch reads SSTLSRREELLKQLKAVEDAIARKRAKIP.

The protein localises to the nucleus. In Danio rerio (Zebrafish), this protein is Zinc finger CCCH domain-containing protein 18 (zc3h18).